A 154-amino-acid chain; its full sequence is 6,7-dimethyl-8-ribityllumazine synthase (154 aa).

5-amino-6-(D-ribitylamino)uracil is bound by residues Phe-22, 56–58 (AFE), and 80–82 (AVI). 85-86 (AT) provides a ligand contact to (2S)-2-hydroxy-3-oxobutyl phosphate. His-88 serves as the catalytic Proton donor. Phe-113 lines the 5-amino-6-(D-ribitylamino)uracil pocket. Residue Arg-127 participates in (2S)-2-hydroxy-3-oxobutyl phosphate binding.

The protein belongs to the DMRL synthase family. As to quaternary structure, forms an icosahedral capsid composed of 60 subunits, arranged as a dodecamer of pentamers.

It catalyses the reaction (2S)-2-hydroxy-3-oxobutyl phosphate + 5-amino-6-(D-ribitylamino)uracil = 6,7-dimethyl-8-(1-D-ribityl)lumazine + phosphate + 2 H2O + H(+). It participates in cofactor biosynthesis; riboflavin biosynthesis; riboflavin from 2-hydroxy-3-oxobutyl phosphate and 5-amino-6-(D-ribitylamino)uracil: step 1/2. Functionally, catalyzes the formation of 6,7-dimethyl-8-ribityllumazine by condensation of 5-amino-6-(D-ribitylamino)uracil with 3,4-dihydroxy-2-butanone 4-phosphate. This is the penultimate step in the biosynthesis of riboflavin. This Geobacillus kaustophilus (strain HTA426) protein is 6,7-dimethyl-8-ribityllumazine synthase.